The chain runs to 134 residues: Peptide methionine sulfoxide reductase MsrB (134 aa).

The MsrB domain occupies 9 to 131 (DEYWRDKLDA…NSASIQLQKE (123 aa)). The Zn(2+) site is built by Cys-48, Cys-51, Cys-97, and Cys-100. Cys-120 serves as the catalytic Nucleophile.

Belongs to the MsrB Met sulfoxide reductase family. It depends on Zn(2+) as a cofactor.

The enzyme catalyses L-methionyl-[protein] + [thioredoxin]-disulfide + H2O = L-methionyl-(R)-S-oxide-[protein] + [thioredoxin]-dithiol. The protein is Peptide methionine sulfoxide reductase MsrB of Saccharophagus degradans (strain 2-40 / ATCC 43961 / DSM 17024).